A 660-amino-acid chain; its full sequence is DNA mismatch repair protein MutL (660 aa).

2 disordered regions span residues proline 368–lysine 426 and asparagine 439–glutamine 461. Positions serine 406–serine 417 are enriched in low complexity.

The protein belongs to the DNA mismatch repair MutL/HexB family.

In terms of biological role, this protein is involved in the repair of mismatches in DNA. It is required for dam-dependent methyl-directed DNA mismatch repair. May act as a 'molecular matchmaker', a protein that promotes the formation of a stable complex between two or more DNA-binding proteins in an ATP-dependent manner without itself being part of a final effector complex. The sequence is that of DNA mismatch repair protein MutL from Aliivibrio fischeri (strain ATCC 700601 / ES114) (Vibrio fischeri).